A 152-amino-acid chain; its full sequence is MSLVIPEKFQHILRVLNTNIDGRRKIAFAITAIKGVGRRYAHVVLRKADIDLTKRAGELTEDEVERVITIMQNPRQYKIPDWFLNRQKDVKDGKYSQVLANGLDNKLREDLERLKKIRAHRGLRHFWGLRVRGQHTKTTGRRGRTVGVSKKK.

Residue Ser-2 is modified to N-acetylserine. Lys-91 participates in a covalent cross-link: Glycyl lysine isopeptide (Lys-Gly) (interchain with G-Cter in SUMO2). Residues Lys-94 and Lys-106 each carry the N6-acetyllysine; alternate modification. Residues Lys-94 and Lys-106 each participate in a glycyl lysine isopeptide (Lys-Gly) (interchain with G-Cter in SUMO2); alternate cross-link.

The protein belongs to the universal ribosomal protein uS13 family. Component of the small ribosomal subunit.

It is found in the cytoplasm. In terms of biological role, component of the small ribosomal subunit. The ribosome is a large ribonucleoprotein complex responsible for the synthesis of proteins in the cell. The protein is Small ribosomal subunit protein uS13 (RPS18) of Homo sapiens (Human).